Consider the following 688-residue polypeptide: Methionine--tRNA ligase (688 aa).

The short motif at 13-23 is the 'HIGH' region element; sequence PYANGNFHIGH. Residues cysteine 144, cysteine 147, cysteine 157, and cysteine 160 each coordinate Zn(2+). Residues 342-346 carry the 'KMSKS' region motif; it reads KMSKS. Lysine 345 is a binding site for ATP. The 107-residue stretch at 582 to 688 folds into the tRNA-binding domain; that stretch reads DFAKVDLRIA…PGAQPGMRIH (107 aa).

Belongs to the class-I aminoacyl-tRNA synthetase family. MetG type 1 subfamily. As to quaternary structure, homodimer. Requires Zn(2+) as cofactor.

It localises to the cytoplasm. It carries out the reaction tRNA(Met) + L-methionine + ATP = L-methionyl-tRNA(Met) + AMP + diphosphate. Its function is as follows. Is required not only for elongation of protein synthesis but also for the initiation of all mRNA translation through initiator tRNA(fMet) aminoacylation. The polypeptide is Methionine--tRNA ligase (Acidovorax sp. (strain JS42)).